The sequence spans 701 residues: Elongation factor G (701 aa).

Residues 8-291 enclose the tr-type G domain; that stretch reads SRYRNIGIVA…AVIDYLPAPI (284 aa). Residues 17-24, 89-93, and 143-146 each bind GTP; these read AHVDAGKT, DTPGH, and NKMD.

The protein belongs to the TRAFAC class translation factor GTPase superfamily. Classic translation factor GTPase family. EF-G/EF-2 subfamily.

Its subcellular location is the cytoplasm. Catalyzes the GTP-dependent ribosomal translocation step during translation elongation. During this step, the ribosome changes from the pre-translocational (PRE) to the post-translocational (POST) state as the newly formed A-site-bound peptidyl-tRNA and P-site-bound deacylated tRNA move to the P and E sites, respectively. Catalyzes the coordinated movement of the two tRNA molecules, the mRNA and conformational changes in the ribosome. The sequence is that of Elongation factor G from Pseudomonas syringae pv. tomato (strain ATCC BAA-871 / DC3000).